The primary structure comprises 74 residues: RNA-binding protein Hfq (74 aa).

The Sm domain occupies 9 to 69 (DQYLNQLRKN…ISTFSPVKNV (61 aa)).

This sequence belongs to the Hfq family. In terms of assembly, homohexamer.

RNA chaperone that binds small regulatory RNA (sRNAs) and mRNAs to facilitate mRNA translational regulation in response to envelope stress, environmental stress and changes in metabolite concentrations. Also binds with high specificity to tRNAs. The sequence is that of RNA-binding protein Hfq from Oceanobacillus iheyensis (strain DSM 14371 / CIP 107618 / JCM 11309 / KCTC 3954 / HTE831).